The following is a 338-amino-acid chain: POU domain, class 4, transcription factor 3 (338 aa).

Residues arginine 56–isoleucine 65 carry the POU-IV box motif. The POU-specific domain occupies aspartate 179–glutamate 256. Residues arginine 274 to lysine 333 constitute a DNA-binding region (homeobox).

The protein belongs to the POU transcription factor family. Class-4 subfamily. As to quaternary structure, interacts with ISL1. As to expression, brain. Seems to be specific to the retina.

Its subcellular location is the nucleus. It is found in the cytoplasm. Functionally, acts as a transcriptional activator. Acts by binding to sequences related to the consensus octamer motif 5'-ATGCAAAT-3' in the regulatory regions of its target genes. Involved in the auditory system development, required for terminal differentiation of hair cells in the inner ear. The protein is POU domain, class 4, transcription factor 3 (POU4F3) of Homo sapiens (Human).